The sequence spans 170 residues: uncharacterized protein (170 aa).

The tract at residues 35–57 (EEVMPATAPSTDPAVPKDAQEAD) is disordered.

This is an uncharacterized protein from Candida tsukubaensis (Yeast).